We begin with the raw amino-acid sequence, 130 residues long: S-protein homolog 22 (130 aa).

Residues 1–21 form the signal peptide; it reads MKYFTIFFIFFSLCMFGHVSG.

This sequence belongs to the plant self-incompatibility (S1) protein family.

It is found in the secreted. The polypeptide is S-protein homolog 22 (Arabidopsis thaliana (Mouse-ear cress)).